The following is a 206-amino-acid chain: MCNEPATSDVALPDLDWAKGDGLLPVIVQDADTLRVLMLGYMNSQALEVTQRSRLVTFYSRSKQRLWTKGERSGHVLHLVAIDADCDADTLLVQARPRGPTCHLGRTSCFPAAPGQFLGALDALVAERERERPQDSYTTALFEQGVRRIAQKVGEEGVETALAGVVQVDDALLDESADLLYHLIVLLRARGLSLADAVTVLEARHR.

Residues 1–117 are phosphoribosyl-AMP cyclohydrolase; it reads MCNEPATSDV…SCFPAAPGQF (117 aa). The segment at 118 to 206 is phosphoribosyl-ATP pyrophosphohydrolase; sequence LGALDALVAE…AVTVLEARHR (89 aa).

This sequence in the N-terminal section; belongs to the PRA-CH family. The protein in the C-terminal section; belongs to the PRA-PH family.

The protein resides in the cytoplasm. It carries out the reaction 1-(5-phospho-beta-D-ribosyl)-ATP + H2O = 1-(5-phospho-beta-D-ribosyl)-5'-AMP + diphosphate + H(+). The enzyme catalyses 1-(5-phospho-beta-D-ribosyl)-5'-AMP + H2O = 1-(5-phospho-beta-D-ribosyl)-5-[(5-phospho-beta-D-ribosylamino)methylideneamino]imidazole-4-carboxamide. The protein operates within amino-acid biosynthesis; L-histidine biosynthesis; L-histidine from 5-phospho-alpha-D-ribose 1-diphosphate: step 2/9. It functions in the pathway amino-acid biosynthesis; L-histidine biosynthesis; L-histidine from 5-phospho-alpha-D-ribose 1-diphosphate: step 3/9. This Xylella fastidiosa (strain 9a5c) protein is Histidine biosynthesis bifunctional protein HisIE (hisI).